The chain runs to 1296 residues: DNA-directed RNA polymerase subunit beta' (1296 aa).

Cys-60, Cys-62, Cys-75, and Cys-78 together coordinate Zn(2+). Mg(2+) is bound by residues Asp-535, Asp-537, and Asp-539. Residues Cys-877, Cys-954, Cys-961, and Cys-964 each coordinate Zn(2+).

This sequence belongs to the RNA polymerase beta' chain family. The RNAP catalytic core consists of 2 alpha, 1 beta, 1 beta' and 1 omega subunit. When a sigma factor is associated with the core the holoenzyme is formed, which can initiate transcription. It depends on Mg(2+) as a cofactor. Zn(2+) serves as cofactor.

The enzyme catalyses RNA(n) + a ribonucleoside 5'-triphosphate = RNA(n+1) + diphosphate. DNA-dependent RNA polymerase catalyzes the transcription of DNA into RNA using the four ribonucleoside triphosphates as substrates. This Beutenbergia cavernae (strain ATCC BAA-8 / DSM 12333 / CCUG 43141 / JCM 11478 / NBRC 16432 / NCIMB 13614 / HKI 0122) protein is DNA-directed RNA polymerase subunit beta'.